We begin with the raw amino-acid sequence, 249 residues long: MIRILVSNDDGVNAPGIKALTEALTEIATVLTVGPDRNCSGASNSLTLTNPLRINRLDNGYISVHGTPTDCVHLAIRELYDGEPDMVVSGINAGANMGDDTLYSGTVAAAMEGRFLGFPAVAISLNGRKFEHYQSAAVYARRIVQGLLAQPLAKDQILNVNVPDLPLDQIKGIKVTRLGARHKAEGIVRTQDPAGREIFWLGPPGQEQDATEGTDFHAIANGYVSITPLTVDLTAYGQLTALQNWVDKI.

A divalent metal cation is bound by residues Asp9, Asp10, Ser40, and Asn92.

The protein belongs to the SurE nucleotidase family. A divalent metal cation is required as a cofactor.

The protein resides in the cytoplasm. The enzyme catalyses a ribonucleoside 5'-phosphate + H2O = a ribonucleoside + phosphate. Nucleotidase that shows phosphatase activity on nucleoside 5'-monophosphates. This is 5'-nucleotidase SurE from Shewanella baltica (strain OS223).